The sequence spans 100 residues: Enhancer of yellow 2 transcription factor (100 aa).

This sequence belongs to the ENY2 family. As to quaternary structure, component of the nuclear pore complex (NPC)-associated AMEX complex (anchoring and mRNA export complex), composed of at least e(y)2 and xmas-2. Component of the SAGA transcription coactivator-HAT complexes, at least composed of Ada2b, e(y)2, Pcaf/Gcn5, Taf10 and Nipped-A/Trrap. Within the SAGA complex, e(y)2, Sgf11, and not/nonstop form an additional subcomplex of SAGA called the DUB module (deubiquitination module). Component of the THO complex, composed of at least e(y)2, HPR1, THO2, THOC5, THOC6 and THOC7. Interacts with e(y)1. Interacts with su(Hw) (via zinc fingers). Interacts with xmas-2; required for localization to the nuclear periphery. Interacts with the nuclear pore complex (NPC).

The protein resides in the nucleus. It localises to the nucleoplasm. The protein localises to the cytoplasm. Its function is as follows. Involved in mRNA export coupled transcription activation by association with both the AMEX and the SAGA complexes. The SAGA complex is a multiprotein complex that activates transcription by remodeling chromatin and mediating histone acetylation and deubiquitination. Within the SAGA complex, participates in a subcomplex that specifically deubiquitinates histone H2B. The SAGA complex is recruited to specific gene promoters by activators, where it is required for transcription. Required for nuclear receptor-mediated transactivation. Involved in transcription elongation by recruiting the THO complex onto nascent mRNA. The AMEX complex functions in docking export-competent ribonucleoprotein particles (mRNPs) to the nuclear entrance of the nuclear pore complex (nuclear basket). AMEX participates in mRNA export and accurate chromatin positioning in the nucleus by tethering genes to the nuclear periphery. This is Enhancer of yellow 2 transcription factor from Drosophila pseudoobscura pseudoobscura (Fruit fly).